Consider the following 190-residue polypeptide: Ribosome maturation factor RimM (190 aa).

The PRC barrel domain occupies 95-177 (EDDEFFYTDL…AGLIDSPDDL (83 aa)). The interval 170–190 (LIDSPDDLTGKPPKPPGKTKE) is disordered. Positions 181 to 190 (PPKPPGKTKE) are enriched in pro residues.

This sequence belongs to the RimM family. As to quaternary structure, binds ribosomal protein uS19.

The protein resides in the cytoplasm. In terms of biological role, an accessory protein needed during the final step in the assembly of 30S ribosomal subunit, possibly for assembly of the head region. Essential for efficient processing of 16S rRNA. May be needed both before and after RbfA during the maturation of 16S rRNA. It has affinity for free ribosomal 30S subunits but not for 70S ribosomes. The protein is Ribosome maturation factor RimM of Rhizobium rhizogenes (strain K84 / ATCC BAA-868) (Agrobacterium radiobacter).